Reading from the N-terminus, the 383-residue chain is Processive diacylglycerol beta-glucosyltransferase (383 aa).

Belongs to the glycosyltransferase 28 family. UgtP subfamily.

The protein localises to the cell membrane. The catalysed reaction is a 1,2-diacyl-3-O-(beta-D-glucopyranosyl)-sn-glycerol + UDP-alpha-D-glucose = a 1,2-diacyl-3-O-(beta-D-Glc-(1-&gt;6)-beta-D-Glc)-sn-glycerol + UDP + H(+). It carries out the reaction a 1,2-diacyl-3-O-(beta-D-Glc-(1-&gt;6)-beta-D-Glc)-sn-glycerol + UDP-alpha-D-glucose = a 1,2-diacyl-3-O-(beta-D-Glc-(1-&gt;6)-beta-D-Glc-(1-&gt;6)-beta-D-Glc)-sn-glycerol + UDP + H(+). It catalyses the reaction a 1,2-diacyl-sn-glycerol + UDP-alpha-D-glucose = a 1,2-diacyl-3-O-(beta-D-glucopyranosyl)-sn-glycerol + UDP + H(+). The protein operates within glycolipid metabolism; diglucosyl-diacylglycerol biosynthesis. Processive glucosyltransferase involved in the biosynthesis of both the bilayer- and non-bilayer-forming membrane glucolipids. Is able to successively transfer up to three glucosyl residues to diacylglycerol (DAG), thereby catalyzing the formation of beta-monoglucosyl-DAG (3-O-(beta-D-glucopyranosyl)-1,2-diacyl-sn-glycerol), beta-diglucosyl-DAG (3-O-(beta-D-glucopyranosyl-beta-(1-&gt;6)-D-glucopyranosyl)-1,2-diacyl-sn-glycerol) and beta-triglucosyl-DAG (3-O-(beta-D-glucopyranosyl-beta-(1-&gt;6)-D-glucopyranosyl-beta-(1-&gt;6)-D-glucopyranosyl)-1,2-diacyl-sn-glycerol). Beta-diglucosyl-DAG is the predominant glycolipid found in Bacillales and is also used as a membrane anchor for lipoteichoic acid (LTA). This is Processive diacylglycerol beta-glucosyltransferase from Bacillus pumilus (strain SAFR-032).